The following is a 378-amino-acid chain: Tetraacyldisaccharide 4'-kinase (378 aa).

Ala-63–Thr-70 is an ATP binding site.

The protein belongs to the LpxK family.

It catalyses the reaction a lipid A disaccharide + ATP = a lipid IVA + ADP + H(+). It participates in glycolipid biosynthesis; lipid IV(A) biosynthesis; lipid IV(A) from (3R)-3-hydroxytetradecanoyl-[acyl-carrier-protein] and UDP-N-acetyl-alpha-D-glucosamine: step 6/6. Transfers the gamma-phosphate of ATP to the 4'-position of a tetraacyldisaccharide 1-phosphate intermediate (termed DS-1-P) to form tetraacyldisaccharide 1,4'-bis-phosphate (lipid IVA). The protein is Tetraacyldisaccharide 4'-kinase of Anaeromyxobacter dehalogenans (strain 2CP-C).